The primary structure comprises 894 residues: CWF19-like protein 2 (894 aa).

The segment at 1-147 is disordered; it reads MATSMAAASG…DEKSGKDDTQ (147 aa). Basic and acidic residues predominate over residues 13 to 56; that stretch reads ESAKSIEERKEQTRNARAEVLRQAKANFEKEERRKELKRLRGED. A coiled-coil region spans residues 13–107; that stretch reads ESAKSIEERK…KKQKYEKNNE (95 aa). Ser-75 is modified (phosphoserine). The segment covering 76-99 has biased composition (basic residues); the sequence is VKKKKKKDKHSKKAKKEKKKKSKK. The span at 128 to 147 shows a compositional bias: basic and acidic residues; the sequence is PDKEKAWKVKDEKSGKDDTQ. Positions 166–281 form a coiled coil; sequence SSSSLKAEKE…AEKAASTKED (116 aa). Residue Lys-171 forms a Glycyl lysine isopeptide (Lys-Gly) (interchain with G-Cter in SUMO2) linkage. Residues 270 to 284 are compositionally biased toward basic and acidic residues; it reads EDAEKAASTKEDYRR. Residues 270-483 form a disordered region; sequence EDAEKAASTK…STFAGSPERE (214 aa). The segment covering 320–330 has biased composition (polar residues); that stretch reads TTDTAKNSNNE. Residues 332-352 show a composition bias toward basic and acidic residues; sequence FIGDEKDKRPGSLETCRRESN. Phosphoserine is present on residues Ser-360 and Ser-372. 2 stretches are compositionally biased toward basic and acidic residues: residues 410–430 and 440–473; these read KNSEERLTSWSRSDGRGDKKH and TDEHQHVPEDPREKSQDEVLRDDPPKKEHLRDTK. 2 positions are modified to phosphoserine: Ser-479 and Ser-484. A coiled-coil region spans residues 502–530; it reads KAEMMGNMELAEQLKVQLEKANKFKETIT. Residues 561 to 583 are disordered; that stretch reads NTPGKSLESQGGRRKRQMVSTHE. Lys-604 is covalently cross-linked (Glycyl lysine isopeptide (Lys-Gly) (interchain with G-Cter in SUMO2)). Residues 644 to 675 are a coiled coil; it reads AAERERLGEEEENQRKKAIAEHRSLAAQMEKC.

This sequence belongs to the CWF19 family.

The sequence is that of CWF19-like protein 2 (CWF19L2) from Homo sapiens (Human).